A 131-amino-acid chain; its full sequence is UPF0344 protein Sca_0577 (131 aa).

Transmembrane regions (helical) follow at residues 1–21 (MLHL…VSYI), 42–62 (LFLV…FATA), 69–89 (LLTL…VTLV), and 99–119 (GLFW…IILP).

Belongs to the UPF0344 family.

It is found in the cell membrane. This chain is UPF0344 protein Sca_0577, found in Staphylococcus carnosus (strain TM300).